A 261-amino-acid polypeptide reads, in one-letter code: Putative cysteine protease YopT-like y4zC (261 aa).

The segment covering 1-15 (MHSPISGSFTSSTQV) has biased composition (polar residues). Disordered stretches follow at residues 1 to 48 (MHSP…CPDK) and 54 to 73 (SKPQASDPNNPSTSSPARPS). Positions 61–73 (PNNPSTSSPARPS) are enriched in low complexity. Active-site residues include cysteine 93, histidine 205, and aspartate 220.

This sequence belongs to the peptidase C58 family.

Functionally, potential cysteine protease, which may play a central role after invasion of host cell. This is Putative cysteine protease YopT-like y4zC from Sinorhizobium fredii (strain NBRC 101917 / NGR234).